Here is a 266-residue protein sequence, read N- to C-terminus: MTKKKLPLRFTGQHFTIDKVLIKDAIRQANISNQDTVLDIGAGKGFLTVHLLKIANNVVAIENDTALVEHLRKLFSDARNVQVVGCDFRNFAVPKFPFKVVSNIPYGITSDIFKILMFENLENFLGGSIVLQFEPTQKLFSRKLYNPYTVFYHTFFDLKLVYEVGPESFLPPPTVKSALLNIKRKHLFFDFKIKAKYLAFISCLLEKPDLSVKTALKSIFRKSQVRTISEKFGLNLNAQIVCLSPSQWLNCFLEMLEVVPEKFHPS.

S-adenosyl-L-methionine-binding residues include H14, T16, G41, E62, D87, and N103.

The protein belongs to the class I-like SAM-binding methyltransferase superfamily. rRNA adenine N(6)-methyltransferase family.

In terms of biological role, involved in erythromycin resistance. This Bacteroides fragilis protein is rRNA adenine N-6-methyltransferase (ermFU).